We begin with the raw amino-acid sequence, 1312 residues long: AT-rich interactive domain-containing protein 4B (1312 aa).

2 disordered regions span residues 124–166 (PLTN…EDDR) and 266–306 (KTEL…EPFP). A phosphoserine mark is found at Ser276, Ser295, and Ser296. Residues 277–305 (EAEEEEEEEDDEKEKEDNSSEEEEEIEPF) show a composition bias toward acidic residues. In terms of domain architecture, ARID spans 306–398 (PEERENFLQQ…YLYGFEEYCR (93 aa)). Glycyl lysine isopeptide (Lys-Gly) (interchain with G-Cter in SUMO2) cross-links involve residues Lys429, Lys440, and Lys462. 5 disordered regions span residues 458–577 (EIER…KVQV), 635–680 (IKHR…EMVS), 708–894 (QASE…TTGF), 909–1212 (LNNS…NRLP), and 1252–1288 (SEVA…SITA). Positions 465–473 (IKPSLGSKK) are antigenic epitope. Ser483 is modified (phosphoserine). Residues 483–496 (SDQEKEVNIKKPED) are compositionally biased toward basic and acidic residues. A Glycyl lysine isopeptide (Lys-Gly) (interchain with G-Cter in SUMO2) cross-link involves residue Lys517. Acidic residues predominate over residues 532–567 (NKEEDEDDEEAEEEEEEEEEEEDEDDDDNNEEEEFE). One can recognise a Tudor-knot domain in the interval 572–624 (GMKVQVRYGRGKNQKMYEASIKDSDVEGGEVLYLVHYCGWNVRYDEWIKADKI). Positions 643-656 (NKLDKEKDKDEKYS) are enriched in basic and acidic residues. Residues Ser666, Ser675, and Ser717 each carry the phosphoserine modification. Basic and acidic residues-rich tracts occupy residues 722–754 (ERGA…KEEQ) and 778–787 (SPERLRKDIE). Residues 728–754 (MDNNGKEESKIDHLTNNRNDLISKEEQ) are a coiled coil. Residue Lys751 forms a Glycyl lysine isopeptide (Lys-Gly) (interchain with G-Cter in SUMO2) linkage. Residues Ser778 and Ser790 each carry the phosphoserine modification. Positions 788–799 (VLSEDTDYEEDE) are enriched in acidic residues. Thr793 bears the Phosphothreonine mark. Composition is skewed to basic and acidic residues over residues 807 to 816 (VKKDTTDKSS), 828 to 852 (CNTE…KESL), 909 to 927 (LNNS…RKDV), and 995 to 1010 (KPIE…RKAE). Position 1014 is a phosphoserine (Ser1014). A Phosphothreonine modification is found at Thr1026. A compositionally biased stretch (low complexity) spans 1028 to 1037 (ESPSSVTVTE). Ser1029 carries the post-translational modification Phosphoserine. Polar residues predominate over residues 1038–1047 (GSRQQSSVTV). Over residues 1056–1065 (EEVRSIKSET) the composition is skewed to basic and acidic residues. Positions 1087–1101 (SSPAGFDASVSSSSS) are enriched in low complexity. Positions 1130 to 1137 (KKQKRSHK) are antigenic epitope. Basic residues predominate over residues 1130 to 1148 (KKQKRSHKATVVNNKKKGK). Thr1150 carries the post-translational modification Phosphothreonine. Residues Ser1152, Ser1153, Ser1155, and Ser1159 each carry the phosphoserine modification. Polar residues predominate over residues 1162 to 1191 (ESITKSQPVKSVSTGMKSHSTKSPARTQSP). The span at 1196-1208 (KNGDKDPDLKEPS) shows a compositional bias: basic and acidic residues. The stretch at 1231 to 1270 (ERITILQEKLQEIRKHYLSLKSEVASIDRRRKRLKKKERE) forms a coiled coil. The span at 1272-1288 (AATSSSSSSPSSSSITA) shows a compositional bias: low complexity.

As to quaternary structure, component of a Sin3A corepressor complex consisting of SIN3A, SAP130, SUDS3/SAP45, SAP180, HDAC1 and HDAC2. Interacts with ARID4A. Interacts with AR. Highly expressed in the testis and in breast, lung, colon, pancreatic and ovarian cancers. Expressed at low levels in the thymus, prostate and ovary.

It localises to the nucleus. The protein resides in the cytoplasm. Its function is as follows. Acts as a transcriptional repressor. May function in the assembly and/or enzymatic activity of the Sin3A corepressor complex or in mediating interactions between the complex and other regulatory complexes. Plays a role in the regulation of epigenetic modifications at the PWS/AS imprinting center near the SNRPN promoter, where it might function as part of a complex with RB1 and ARID4A. Involved in spermatogenesis, together with ARID4A, where it functions as a transcriptional coactivator for AR (androgen receptor) and enhances expression of genes required for sperm maturation. Regulates expression of the tight junction protein CLDN3 in the testis, which is important for integrity of the blood-testis barrier. Plays a role in myeloid homeostasis where it regulates the histone methylation state of bone marrow cells and expression of various genes involved in hematopoiesis. May function as a leukemia suppressor. This chain is AT-rich interactive domain-containing protein 4B (ARID4B), found in Homo sapiens (Human).